We begin with the raw amino-acid sequence, 224 residues long: MLGQPTRAQLAALVDHTLLKPETTRADVAALVAEAAELGVYAVCVSPSMVPVAVQAGGVRVAAVTGFPSGKHVSSVKAHEAAAALASGASEIDMVIDIGAALCGDIDAVRSDIEAVRAAAAGAVLKVIVESAVLLGQSNAHTLVDACRAAEDAGADFVKTSTGCHPAGGATVRAVELMAETVGPRLGVKASGGIRTAADAVAMLNAGATRLGLSGTRAVLDGLS.

The active-site Proton donor/acceptor is Asp93. The active-site Schiff-base intermediate with acetaldehyde is Lys159. The active-site Proton donor/acceptor is Lys189.

This sequence belongs to the DeoC/FbaB aldolase family. DeoC type 1 subfamily.

The protein localises to the cytoplasm. It catalyses the reaction 2-deoxy-D-ribose 5-phosphate = D-glyceraldehyde 3-phosphate + acetaldehyde. It participates in carbohydrate degradation; 2-deoxy-D-ribose 1-phosphate degradation; D-glyceraldehyde 3-phosphate and acetaldehyde from 2-deoxy-alpha-D-ribose 1-phosphate: step 2/2. Its function is as follows. Catalyzes a reversible aldol reaction between acetaldehyde and D-glyceraldehyde 3-phosphate to generate 2-deoxy-D-ribose 5-phosphate. In Mycobacterium bovis (strain ATCC BAA-935 / AF2122/97), this protein is Deoxyribose-phosphate aldolase.